Reading from the N-terminus, the 378-residue chain is Acyl-coenzyme A diphosphatase NUDT19 (378 aa).

A Nudix hydrolase domain is found at 7 to 258 (HWREAASVLL…EIWLAPPQFY (252 aa)). The short motif at 105–126 (SPLPGEVAFRICAIRETFEEAG) is the Nudix box element. Residues Glu-120 and Glu-124 each coordinate Mg(2+). Residues 376–378 (SRL) carry the Microbody targeting signal motif.

The protein belongs to the Nudix hydrolase family. In terms of assembly, monomer. Requires Mg(2+) as cofactor. The cofactor is Mn(2+).

The protein localises to the peroxisome. It carries out the reaction an acyl-CoA + H2O = an acyl-4'-phosphopantetheine + adenosine 3',5'-bisphosphate + 2 H(+). It catalyses the reaction CoA + H2O = (R)-4'-phosphopantetheine + adenosine 3',5'-bisphosphate + 2 H(+). The enzyme catalyses hexanoyl-CoA + H2O = hexanoyl-4'-phosphopantetheine + adenosine 3',5'-bisphosphate + 2 H(+). The catalysed reaction is octanoyl-CoA + H2O = S-octanoyl-4'-phosphopantetheine + adenosine 3',5'-bisphosphate + 2 H(+). It carries out the reaction butanoyl-CoA + H2O = S-butanoyl-4'-phosphopantetheine + adenosine 3',5'-bisphosphate + 2 H(+). It catalyses the reaction propanoyl-CoA + H2O = propanoyl-4'-phosphopantetheine + adenosine 3',5'-bisphosphate + 2 H(+). The enzyme catalyses malonyl-CoA + H2O = malonyl-4'-phosphopantetheine + adenosine 3',5'-bisphosphate + 2 H(+). The catalysed reaction is succinyl-CoA + H2O = succinyl-4'-phosphopantetheine + adenosine 3',5'-bisphosphate + 2 H(+). It carries out the reaction choloyl-CoA + H2O = S-choloyl-4'-phosphopantetheine + adenosine 3',5'-bisphosphate + 2 H(+). It catalyses the reaction 4,8-dimethylnonanoyl-CoA + H2O = S-(4,8-dimethylnonanoyl)-4'-phosphopantetheine + adenosine 3',5'-bisphosphate + 2 H(+). The enzyme catalyses (9Z,12Z,15Z)-octadecatrienoyl-CoA + H2O = S-(9Z,12Z,15Z-octadecatrienoyl)-4'-phosphopantetheine + adenosine 3',5'-bisphosphate + 2 H(+). The catalysed reaction is (9Z,12Z)-octadecadienoyl-CoA + H2O = S-(9Z,12Z-octadecadienoyl)-4'-phosphopantetheine + adenosine 3',5'-bisphosphate + 2 H(+). It carries out the reaction (9Z)-hexadecenoyl-CoA + H2O = S-(9Z-hexadecenoyl)-4'-phosphopantetheine + adenosine 3',5'-bisphosphate + 2 H(+). It catalyses the reaction (9Z)-tetradecenoyl-CoA + H2O = S-(9Z-tetradecenoyl)-4'-phosphopantetheine + adenosine 3',5'-bisphosphate + 2 H(+). The enzyme catalyses (6Z)-octenoyl-CoA + H2O = S-(6Z-octenoyl)-4'-phosphopantetheine + adenosine 3',5'-bisphosphate + 2 H(+). The catalysed reaction is hexadecanoyl-CoA + H2O = S-hexadecanoyl-4'-phosphopantetheine + adenosine 3',5'-bisphosphate + 2 H(+). It carries out the reaction tetradecanoyl-CoA + H2O = tetradecanoyl-4'-phosphopantetheine + adenosine 3',5'-bisphosphate + 2 H(+). It catalyses the reaction dodecanoyl-CoA + H2O = S-dodecanoyl-4'-phosphopantetheine + adenosine 3',5'-bisphosphate + 2 H(+). The enzyme catalyses a 5'-end CoA-ribonucleoside in mRNA + H2O = a 5'-end phospho-adenosine-phospho-ribonucleoside in mRNA + (R)-4'-phosphopantetheine + 2 H(+). In terms of biological role, fatty acyl-coenzyme A (CoA) diphosphatase that hydrolyzes fatty acyl-CoA to yield acyl-4'-phosphopantetheine and adenosine 3',5'-bisphosphate. Mediates the hydrolysis of a wide range of CoA esters, including choloyl-CoA and branched-chain fatty-acyl-CoA esters and at low substrate concentrations medium and long-chain fatty-acyl-CoA esters are the primary substrates. Highest activity seen with medium-chain acyl-CoA esters and higher rates of activity seen with the unsaturated acyl-CoA esters compared with the saturated esters. Exhibits decapping activity towards dpCoA-capped RNAs in vitro. This Gallus gallus (Chicken) protein is Acyl-coenzyme A diphosphatase NUDT19 (NUDT19).